Reading from the N-terminus, the 43-residue chain is LICYVSRDGKTATCPPQGKCEKYAVSASHTXHXFYVYGCTSXC.

Intrachain disulfides connect C3–C20 and C14–C39.

As to expression, expressed by the venom gland.

The protein localises to the secreted. Its function is as follows. Neurotoxin. Blocks muscular nicotinic acetylcholine receptors (nAChR). The protein is Venom protein E2 of Micrurus pyrrhocryptus (Coral snake).